The following is a 445-amino-acid chain: Trigger factor (445 aa).

A PPIase FKBP-type domain is found at 162–247 (GDQVTIDAIG…IKAVHTAEPT (86 aa)).

It belongs to the FKBP-type PPIase family. Tig subfamily.

It localises to the cytoplasm. It carries out the reaction [protein]-peptidylproline (omega=180) = [protein]-peptidylproline (omega=0). Functionally, involved in protein export. Acts as a chaperone by maintaining the newly synthesized protein in an open conformation. Functions as a peptidyl-prolyl cis-trans isomerase. In Rickettsia africae (strain ESF-5), this protein is Trigger factor.